A 97-amino-acid chain; its full sequence is MKIYAVLLCLLLIAVPVSPEKLTGPDKAPVTCCFHVLKLKIPLRVLKSYERINNIQCPMEAVVFQTKQGMSLCVDPTQKWVSEYMEILDQKSQILQP.

The first 23 residues, 1–23 (MKIYAVLLCLLLIAVPVSPEKLT), serve as a signal peptide directing secretion. 2 disulfides stabilise this stretch: cysteine 32–cysteine 57 and cysteine 33–cysteine 73.

This sequence belongs to the intercrine beta (chemokine CC) family. Monomer or homodimer; in equilibrium.

The protein resides in the secreted. Chemotactic factor that attracts monocytes. This protein can bind heparin. The protein is C-C motif chemokine 8 (Ccl8) of Mus musculus (Mouse).